We begin with the raw amino-acid sequence, 467 residues long: DEAD-box ATP-dependent RNA helicase CshA (467 aa).

Residues 2–30 (TTFQELGLSQEVMKAIERMGFEETTPIQA) carry the Q motif motif. In terms of domain architecture, Helicase ATP-binding spans 33 to 203 (IPLSLQNKDV…ERFMNEPELV (171 aa)). 46-53 (AQTGTGKT) is an ATP binding site. Positions 151–154 (DEAD) match the DEAD box motif. A Helicase C-terminal domain is found at 214–374 (NIQQYYLEVH…RMKPPTLDEA (161 aa)). Residues 428 to 467 (TTPVQLTEEPPLAVKREKKRGGRPDGSARSRTKKRRITAH) are disordered. Positions 457–467 (SRTKKRRITAH) are enriched in basic residues.

Belongs to the DEAD box helicase family. CshA subfamily. As to quaternary structure, oligomerizes, may be a member of the RNA degradosome.

It is found in the cytoplasm. It catalyses the reaction ATP + H2O = ADP + phosphate + H(+). In terms of biological role, DEAD-box RNA helicase possibly involved in RNA degradation. Unwinds dsRNA in both 5'- and 3'-directions, has RNA-dependent ATPase activity. This is DEAD-box ATP-dependent RNA helicase CshA from Geobacillus kaustophilus (strain HTA426).